Reading from the N-terminus, the 384-residue chain is Mannitol-1-phosphate 5-dehydrogenase (384 aa).

3 to 14 (AVHFGAGNIGRG) provides a ligand contact to NAD(+).

It belongs to the mannitol dehydrogenase family.

It catalyses the reaction D-mannitol 1-phosphate + NAD(+) = beta-D-fructose 6-phosphate + NADH + H(+). This chain is Mannitol-1-phosphate 5-dehydrogenase, found in Arthrobacter sp. (strain FB24).